Reading from the N-terminus, the 181-residue chain is Adenylate kinase (181 aa).

10-15 (GAGKGT) serves as a coordination point for ATP. The NMP stretch occupies residues 30-59 (STGDLFRANIGEGTPLGLEAKSYIDAGKLV). Residues Thr31, Arg36, 57–59 (KLV), 85–88 (GFPR), and Gln92 contribute to the AMP site. The tract at residues 126-132 (ARGRADD) is LID. Residue Arg127 coordinates ATP. Arg129 and Arg140 together coordinate AMP. Gly166 provides a ligand contact to ATP.

This sequence belongs to the adenylate kinase family. Monomer.

Its subcellular location is the cytoplasm. The catalysed reaction is AMP + ATP = 2 ADP. It functions in the pathway purine metabolism; AMP biosynthesis via salvage pathway; AMP from ADP: step 1/1. Catalyzes the reversible transfer of the terminal phosphate group between ATP and AMP. Plays an important role in cellular energy homeostasis and in adenine nucleotide metabolism. The polypeptide is Adenylate kinase (Corynebacterium aurimucosum (strain ATCC 700975 / DSM 44827 / CIP 107346 / CN-1) (Corynebacterium nigricans)).